The sequence spans 115 residues: MAEITSAKATAKTVRVSPRKTRLVIDLIRGKRVADAIAILKFTPTKAAVEVENVLNSAIANAENNFGLEKANLVVSETFINEGPTMKRFRPRAKGSASPINKRTAHITVVVAEKE.

It belongs to the universal ribosomal protein uL22 family. Part of the 50S ribosomal subunit.

Functionally, this protein binds specifically to 23S rRNA; its binding is stimulated by other ribosomal proteins, e.g. L4, L17, and L20. It is important during the early stages of 50S assembly. It makes multiple contacts with different domains of the 23S rRNA in the assembled 50S subunit and ribosome. The globular domain of the protein is located near the polypeptide exit tunnel on the outside of the subunit, while an extended beta-hairpin is found that lines the wall of the exit tunnel in the center of the 70S ribosome. This is Large ribosomal subunit protein uL22 from Lactococcus lactis subsp. lactis (strain IL1403) (Streptococcus lactis).